The primary structure comprises 107 residues: DNA-directed RNA polymerase subunit omega (107 aa).

Belongs to the RNA polymerase subunit omega family. As to quaternary structure, the RNAP catalytic core consists of 2 alpha, 1 beta, 1 beta' and 1 omega subunit. When a sigma factor is associated with the core the holoenzyme is formed, which can initiate transcription.

It catalyses the reaction RNA(n) + a ribonucleoside 5'-triphosphate = RNA(n+1) + diphosphate. In terms of biological role, promotes RNA polymerase assembly. Latches the N- and C-terminal regions of the beta' subunit thereby facilitating its interaction with the beta and alpha subunits. The sequence is that of DNA-directed RNA polymerase subunit omega from Oenococcus oeni (strain ATCC BAA-331 / PSU-1).